Consider the following 108-residue polypeptide: uncharacterized protein (108 aa).

Residues 72–94 traverse the membrane as a helical segment; that stretch reads LGLHTSVFFFLRIVCMSSAASVF.

It localises to the membrane. This is an uncharacterized protein from Saccharomyces cerevisiae (strain ATCC 204508 / S288c) (Baker's yeast).